A 397-amino-acid chain; its full sequence is Odorant receptor 85a (397 aa).

At 1–46 the chain is on the cytoplasmic side; sequence MIFKYIQEPVLGSLFRSRDSLIYLNRSIDQMGWRLPPRTKPYWWLY. The chain crosses the membrane as a helical span at residues 47-67; sequence YIWTLVVIVLVFIFIPYGLIM. The Extracellular segment spans residues 68 to 83; it reads TGIKEFKNFTTTDLFT. Residue Asn75 is glycosylated (N-linked (GlcNAc...) asparagine). The helical transmembrane segment at 84-104 threads the bilayer; the sequence is YVQVPVNTNASIMKGIIVLFM. At 105-142 the chain is on the cytoplasmic side; the sequence is RRRFSRAQKMMDAMDIRCTKMEEKVQVHRAAALCNRVV. A helical membrane pass occupies residues 143 to 163; the sequence is VIYHCIYFGYLSMALTGALVI. The Extracellular portion of the chain corresponds to 164 to 192; the sequence is GKTPFCLYNPLVNPDDHFYLATAIESVTM. Residues 193–213 traverse the membrane as a helical segment; the sequence is AGIILANLILDVYPIIYVVVL. At 214-262 the chain is on the cytoplasmic side; sequence RIHMELLSERIKTLRTDVEKGDDQHYAELVECVKDHKLIVEYGNTLRPM. Residues 263 to 283 form a helical membrane-spanning segment; it reads ISATMFIQLLSVGLLLGLAAV. Residues 284-294 lie on the Extracellular side of the membrane; sequence SMQFYNTVMER. The helical transmembrane segment at 295–315 threads the bilayer; sequence VVSGVYTIAILSQTFPFCYVC. The Cytoplasmic portion of the chain corresponds to 316–347; it reads EQLSSDCESLTNTLFHSKWIGAERRYRTTMLY. Residues 348-368 traverse the membrane as a helical segment; the sequence is FIHNVQQSILFTAGGIFPICL. The Extracellular portion of the chain corresponds to 369-397; it reads NTNIKMAKFAFSVVTIVNEMDLAEKLRRE.

This sequence belongs to the insect chemoreceptor superfamily. Heteromeric odorant receptor channel (TC 1.A.69) family. Or2a subfamily. Interacts with Orco. Complexes exist early in the endomembrane system in olfactory sensory neurons (OSNs), coupling these complexes to the conserved ciliary trafficking pathway. Expressed in olfactory sensory neurons in the antenna.

The protein resides in the cell membrane. Functionally, odorant receptor which mediates acceptance or avoidance behavior, depending on its substrates. The odorant receptor repertoire encodes a large collection of odor stimuli that vary widely in identity, intensity, and duration. May form a complex with Orco to form odorant-sensing units, providing sensitive and prolonged odorant signaling and calcium permeability. The protein is Odorant receptor 85a (Or85a) of Drosophila melanogaster (Fruit fly).